A 116-amino-acid polypeptide reads, in one-letter code: MTNRCACFALAFLLFCLLAISSIEAAPMPSQSNGGYGGAGYNELEEVPDDLLMELMTRFGRTIIRARNDLENSKRTVDFGLARGYSGTQEAKHRMGLAAANFAGGPGRRRRSETDV.

The first 25 residues, 1 to 25 (MTNRCACFALAFLLFCLLAISSIEA), serve as a signal peptide directing secretion. A propeptide spanning residues 26-75 (APMPSQSNGGYGGAGYNELEEVPDDLLMELMTRFGRTIIRARNDLENSKR) is cleaved from the precursor. Position 106 is a proline amide (Pro106). The propeptide occupies 112–116 (SETDV).

It localises to the secreted. In terms of biological role, regulation of fluid secretion. Stimulates Malpighian tubules fluid secretion by activating the apical membrane V-ATPase via cyclic AMP of principal cells in the main secretory segment. In Drosophila melanogaster (Fruit fly), this protein is Diuretic hormone class 2 (Dh31).